The following is a 421-amino-acid chain: CinA-like protein (421 aa).

Belongs to the CinA family.

The chain is CinA-like protein from Synechococcus sp. (strain ATCC 27144 / PCC 6301 / SAUG 1402/1) (Anacystis nidulans).